Reading from the N-terminus, the 263-residue chain is Putative TATA-binding protein pB263R (263 aa).

It belongs to the asfivirus B263R family.

Functionally, putative TATA-binding protein. This is Putative TATA-binding protein pB263R from Ornithodoros (relapsing fever ticks).